The sequence spans 21 residues: Cold shock protein CspSt (21 aa).

The 21-residue stretch at 1 to 21 (KNGTVKWFNAEKGFGFITSED) folds into the CSD domain.

Its subcellular location is the cytoplasm. The protein is Cold shock protein CspSt of Streptococcus thermophilus.